Consider the following 506-residue polypeptide: 2,3-bisphosphoglycerate-independent phosphoglycerate mutase (506 aa).

Mn(2+) is bound by residues Asp-13 and Ser-63. The active-site Phosphoserine intermediate is the Ser-63. Substrate is bound by residues His-124, 153–154, Arg-183, Arg-189, 254–257, and Lys-330; these read RD and RADR. Mn(2+)-binding residues include Asp-396, His-400, Asp-437, His-438, and His-456.

Belongs to the BPG-independent phosphoglycerate mutase family. Monomer. The cofactor is Mn(2+).

It catalyses the reaction (2R)-2-phosphoglycerate = (2R)-3-phosphoglycerate. It functions in the pathway carbohydrate degradation; glycolysis; pyruvate from D-glyceraldehyde 3-phosphate: step 3/5. Its function is as follows. Catalyzes the interconversion of 2-phosphoglycerate and 3-phosphoglycerate. The polypeptide is 2,3-bisphosphoglycerate-independent phosphoglycerate mutase (Cereibacter sphaeroides (strain ATCC 17029 / ATH 2.4.9) (Rhodobacter sphaeroides)).